The sequence spans 147 residues: MKALLILGLLLLSVAVQGKTFKRCELAKTLKNLGLAGYKGVSLANWMCLAKGESNYNTQAKNYNPGSKSTDYGIFQINSKWWCNDGKTPKAVNGCGVSCSALLKDDITQAVACAKKIVSQQGITAWVAWKNKCRNRDLTSYVKGCGV.

Positions 1–18 are cleaved as a signal peptide; that stretch reads MKALLILGLLLLSVAVQG. Positions 19-147 constitute a C-type lysozyme domain; sequence KTFKRCELAK…LTSYVKGCGV (129 aa). Intrachain disulfides connect C24/C145, C48/C133, C83/C99, and C95/C113. Active-site residues include E53 and D71.

The protein belongs to the glycosyl hydrolase 22 family. Monomer. As to expression, trachea.

It carries out the reaction Hydrolysis of (1-&gt;4)-beta-linkages between N-acetylmuramic acid and N-acetyl-D-glucosamine residues in a peptidoglycan and between N-acetyl-D-glucosamine residues in chitodextrins.. Lysozymes have primarily a bacteriolytic function; those in tissues and body fluids are associated with the monocyte-macrophage system and enhance the activity of immunoagents. The sequence is that of Lysozyme C, tracheal isozyme from Bos taurus (Bovine).